Consider the following 4763-residue polypeptide: MAGTANPADEGLTGPTETTNHINSARSDVALGSSLSGIVPMTKIPALNTIDQFVAEGSPDDLIGQSPWRRIGQGDVSGELATGLIEGYARFVSALTGVEDVAFAVLCQASTRPSQALICASVTLTDQGREVPSAWQCAVRELDFSYYNRSEVQFALDLGLTGGPENRKAGLSTLAENDCLSLYVRGSTDGLCISFTYPRRLIPEAAVSQLLKTITFHITQTTGCLQSTGAWPDDPTPDLSILNFPPLMIPPSRDHDSATMPRHSKSFLLHSAFEGWAQKSPTSIALDFVHSLPSASTVAEHSTLTYAALNAAATYLAIHIRSLLSDNTRNAGSRIIPVYMSTSPELYISYLGILKAGYAFCPIPTDAPPQRVREIFQDIDSSVILGDGEEPSSVSWFLSAAGEATSKPTWVNVAEVSRWKHLSREDTEIATEDRLFEPPDIDHNEIAYLLFTSGSTGKPKGVQVSHLAVTCSIESHATAIPLPGTSAGDFRWFQFASPTFDPSLMEIFVTLSSGGTLCSASRSLTLTDLEGTINEARATVMMATPSLAALLRPAQLTTLQYLWTMGEKLNRTVIENFTQKAHSNDLNGDSVPALRLLVNAYGPTEAAINCTFFAPVEYHTRGSIIGEPLPTCSIFVLDPASHTPKPIPAGLAGELAIGGPQVSQGYLNRPEETANSFVHSPEYGYLYRTGDLARIVWDEKGAQVIEFLGRITSDQVKISGRRVELGEIESVLATLTGVREVVAVVPKRDASVQGSEQIVACIVADSLSEDAAPEFVRLADECAHRHLAAYMCPSSYVFFDSIPRTSSGKVDRNSISSMLQQGKDSGMKFYMPSNDVPEARGMARAEWDPLEDEKALELRTLVLDLVAQTTGQDISVIKPNTSLYTLGLDSLGSMQFLQKLRDKSLHNLSVGDVLQSNTVNGLLTLILNGKTNLRGLTNGQLADDSRMSLAEHLQAFNDTNLSRCAKRLSISPERIQTVLPTTETQSGMLTSFLRTSTDSSFATRSYIYHSVISLEPHVDIERLKKAWESVIASYDSFRTRFCWIDDDMAPFAQCILKEDAASAPMWAINHTFGDSMHEDSLTRALREAENTISLDSPWKLSLLESSGDKVIILSMFHGIFDGGSLQLLLENVSSVYDGQLPAPRTSLEHVVVNHFQANQTATSNFWKEYLNKYSPIAFPSLTAYRPPAVNATGCVEITPRTTHDILKQQSRTIGSTPLSVLQAAWASLLLAYTGTQDHDVVMGSVISGRFDPDSEICIGPTFTTIPTRLALGQIPKAGGFWTNKSVVNHLASLNAKALSHLQPRLGSLVTADSKLPYDTVLAYQDFSAGSSTSSIWKSIDHPPMANDYAVMIEVWPARDSSLTLRASFALSQMDRDGAKVMLHQLDDIIAFILQNPDGDFENALLYTRPDLKASYNPMPKEADEVSDGDLIHTKFENHANSHPDDMALLFKYDLEDDGNLQNISWTYGELNARADNLAAYLCETYDKLTNKVVPICIEKSPAMYIAILGILKAGGAWCPIDTFSPAQRRHDLIKRTGAGVLLVSSEDGEQPKDAIPIGIDVVDVKKYADPLVSWPSVGRWSSKKLSSPAGLAYLIWTSGTTGAPKGVPITHSAAVSCFRSLKKDIPSDVSGGVVRCLQFSQYTFDVSIQDLFYTWSLGGVLISATREIMLGSFAKLANTTRATHAHLTPAFAAGVPRNSCETLEVITMIGEKLTQHVADDWGTDMRAYNTYGPAEVTIVSTVREFGNDCLNIKSANVGWPMESVSVFVTRNKQIVMKNAVGELALGGPQLSPGYLDQEDVTKAKYVWSEEAGQILYYTGDLVRMLADGSLEFMNRVDDLVKIGGIRIELSEISFALGGCHPLVENIETLYIDRPDRPSKVLVAFLSASNATGADAGDDLLLLNDSALQIALSTREKAHTALPAYMVPSVYLVMKRIPRTQSAKTDRRALQAAYASVDIEDWENRMNPENNATGHPTDDLVASDAMEKIVHMIASLINISPSIVAKASRLRSLGIDSIHAIRLASRLKEAGYRLSFIEVINCVTVQDLARLCTSSSEVDALPAAEFDINLFNDQWHDIVASKVDGEFFTVRATPIQESLLSETMGTYNLYWSNHLFSLDKSVDVKRLKQAWLALCQKNEALRTGFIPVAEVNNSSRKDDLDFSILQVLHDHPTLDWEYVMCEDHEWDRLLHSRIEDVMKAHQKTYFKQPPWAVTVLDNGVERFMVLTMHHSIHDGPSLDLIERDLRSAYIDKPPSRYQLRSALSKILPTDEMAAETRRFWSSELQKYSELDAPAWPDLTGKRKPETAVQEHNLISEQMRMTEPLEKLQSISAELGVSSIASLIRAAWGFVSLSYLGVPAAVFAETVSDRILHADLDNGIGPLISVVPVPFDPKGTAREVLAEQQRISTQSRKYRHIHAREVRRMLNRPRGEPLYPAVFAFHPAGAEADGTTNPGLWHELEDRIGLHVEHPMAFNVLQNADSSLVLEVFSDASLMSHEHLSIFVRQVDSLVSAMLANPDKELRELINHLPPSLRSKSSQHVSEAVRNSVTLSPTHWLELNAREHPEWTAVEVASSISASGIEKQSMSYGTLNAAANCVAAFIASVGYKNRMIAVCAGRNLPSYPVIVGVFKSGNTYLPIDNNLPNDRKTFLIEDGNCPLVFTETAFAATFSDVPETCRVLCIDHPSFVDSLAGMPTDNRAYASDPQDNAYLLYTSGSTGKPKGVMVSRANLSAFIESFSEFVCRVAPSTLELGGRGRYLAQASRAFDVHLLEMFFAWRHGMASVTAERTMLLDDLQLTITKWGITHASMVPSLVDQTNLRPELCPELKYLSVGGEKISKRVLDTWAGLPHVALANAYGPTEVTIGCTFALVGKETTIRNIGPPLSACTCHVLIPGTMDYALRGQTGELCFTGDIVGNGYLNRPDATGFVQGPDGEKMYRTGDIGRLMSDDSVEYVGRGDDQTKIRGQRLELGEVSEVIRSSSPVQIGVVTTVTKHPGLARPQLISFIARSGDKSRQRSGDATIIHSDLATLGKELRDACQRKLPAYMVPEIILPITFIPLAPMSGKANIKELHSMFSSLPLASILQGNNPGTSDTAAFTDRPLSSDEEAVVSEICAVIKVERENINPLTNIFEIGLDSLSAISLSVKLRRIGYDATVALVMGNPVVEQLAQLPRKSTEAVADPHSSDLTKRLAELETEYHKGYTRPANSGQVAVRPCLPLQEGLVARSINSEEDQLYVNHIALSFGPGLDSGRLRFAWQDTADNSEILRTCFAPLEKEIVQVVLTPGGAISWTEDEYDSLEDCIKEQRARQQEISRGIIKNMTDVPPVRFHLATLSSKRPLVLFIAIHHALYDGESFSMLLEDVAARYVGEPVTRRGSPAAFIDHVYGQNLEKAQQHWVNALSDCQPTIFRVDTGVVEETTFINRKLHAGLAKLERHSADLHTTVPSLMQALFALLLADRVNSSDVTYGLVLSGRAVAVPDAESVLLPCITTIPARLNTSGLKTVSDVVRSVHQSTARSLEYQHTSLRHIQRWLKSEKPLFDCLFSYIRSTPAPKNTLWGQLESTMPSEYPLAVEIEANSEKDEMYVHCGFSPSFGSADRGQEFLEKLDALLSAFLFEDDIALDSFSLANSGNPGSRATEVKWDATTWSATETKIRDLTATFCGLDVVNVSKGTSFISLGIDSVTAIQFARKLRELQFEIVPSDIMRFPCVGALAEHVDERSSEGRQSARVGDKKPRVSLAAHRDNVPLLDDGDSVAAIFESTPLQAGMITRTLGSDTQVYVHPHIVRLTEGVDIDRLSKAISEVVAKNDILRTSFHPIAENGVTWVGAVHTNPPLQWKEITLPSNADVIAELTSLYSFREVADFETPPVRFVLVHRKNEKLFVVIMHHALYDGVSLPLLFEELAATYHGQTTVGRPQFSEIAHYIVEGQNDSCDFWTKKLAGYEPVEIPALSSSEATERMLLSERKIGLDVEKVVESCKSMEVTVQSVALLAYAKVLACLGGKRDVVFGQVLAGRSLPVPGADQTIGPLFNTVAQRVLFEPKFLSNREMAQRVQQLTSESQAFQHAPLKDVQRALRQEHGMNAASLFDTLFVFQKSADLTTDTPHEQQIWTPFETEGYAAQAEHKLNVEIDHGREAIIVSGSGDGRYICQQALDEFMADFCTAFQDIIEHPSRCATAAPERLGGLPLRLSNAEEPERGHSESDAPAHESIIRDVLAEVSGVSVDSITPSTSIYNIGLDSLSAIRIASICRSRGLKAGVADVLQGNTLRGISARIISPVEAPIQAREPLIKDHEAIEKAVLQRLGLNKDEVETILPCLSGQLYHLVSWLKSGRTLFEPAWSYYSIERIDSGKLEEAWNQLRQRHHILRTCFVATSPSMAVQAVLKDAPQNAEIFKVIESPACIEEAAKAQAREEGLNPSSLFVPPVRLRLLKASDKDGIQIFINHAAYDAWTMPMFVSELAHLYREQPVESTPDFPSFVEYATRSLREVDEQTYWSSQVGSSLPTLIKPTNQGLPKQFFVGVWEKVQNLSQLERACRSACLSLQSVVLLAVSRSLARTTGVQSPTIGLYQTGRSASFSNIENLSGPCLNVTPFTFPSPGAKAESNALDEVQAIQNSLAERVLYEQSCLRDILTNWASTKGKGPLFNTWVNLLWMHQPSTRGDSKSHTDLDLFQPLRIGVPTDFIPATPLPDPSGETTSISALDTSYLPDENLYIDIGPDYSTDTIGFGVRVEGGLLTEKEVRGMVDDVSGEIEGIMAAIQQGKSR.

The segment at 1–24 (MAGTANPADEGLTGPTETTNHINS) is disordered. Over residues 15–24 (PTETTNHINS) the composition is skewed to polar residues. Positions 296 to 815 (STVAEHSTLT…SSGKVDRNSI (520 aa)) are adenylation 1. The 78-residue stretch at 853-930 (EKALELRTLV…GLLTLILNGK (78 aa)) folds into the Carrier 1 domain. Residue Ser890 is modified to O-(pantetheine 4'-phosphoryl)serine. Residues 1003–1396 (TRSYIYHSVI…DIIAFILQNP (394 aa)) are condensation 1. The segment at 1398–1951 (GDFENALLYT…AKTDRRALQA (554 aa)) is adenylation 2. A Carrier 2 domain is found at 1979–2055 (LVASDAMEKI…DLARLCTSSS (77 aa)). An O-(pantetheine 4'-phosphoryl)serine modification is found at Ser2016. The tract at residues 2092 to 2423 (TPIQESLLSE…HIHAREVRRM (332 aa)) is condensation 2. Residues 2556 to 3070 (ELNAREHPEW…MSGKANIKEL (515 aa)) form an adenylation 3 region. One can recognise a Carrier 3 domain in the interval 3099 to 3175 (RPLSSDEEAV…QLAQLPRKST (77 aa)). An O-(pantetheine 4'-phosphoryl)serine modification is found at Ser3136. The interval 3217 to 3626 (PLQEGLVARS…DDIALDSFSL (410 aa)) is condensation 3. Residues 3647–3720 (SATETKIRDL…ALAEHVDERS (74 aa)) enclose the Carrier 4 domain. Position 3681 is an O-(pantetheine 4'-phosphoryl)serine (Ser3681). The tract at residues 3761-4093 (TPLQAGMITR…SLFDTLFVFQ (333 aa)) is condensation 4. One can recognise a Carrier 5 domain in the interval 4204 to 4277 (PAHESIIRDV…GISARIISPV (74 aa)). Ser4238 is modified (O-(pantetheine 4'-phosphoryl)serine). Residues 4344 to 4593 (ERIDSGKLEE…PCLNVTPFTF (250 aa)) form a condensation 5 region.

This sequence belongs to the NRP synthetase family.

Its pathway is siderophore biosynthesis. Nonribosomal peptide synthase; part of the siderophore biosynthetic pathway. Aspergillus fumigatus produces four types of siderophores, low-molecular-mass iron chelators, including excreted fusarinine C (FsC) and triacetylfusarinine C (TAFC) for iron uptake; and intacellular ferricrocin (FC) for hyphal and hydroxyferricrocin (HFC) for conidial iron distribution and storage. TAFC consists of three N(2)-acetyl-N(5)-anhydromevalonyl-N(5)-hydroxyornithine residues cyclically linked by ester bonds; FC is a cyclic hexapeptide with the structure Gly-Ser-Gly-(N(5)-acetyl-N(5)-hydroxyornithine)x3. The biosynthesis of all four siderophores depends on the hydroxylation of ornithine, catalyzed by the monooxygenase sidA. Subsequently, the pathways for biosynthesis of extra- and intracellular siderophores split. For biosynthesis of extracellular siderophores, the transacylase sidF transfers anhydromevalonyl to N(5)-hydroxyornithine. The required anhydromevalonyl-CoA moiety is derived from mevalonate by CoA ligation and dehydration catalyzed by sidI and sidH respectively. The acetylation of N(5)-hydroxyornithine for FC biosynthesis involves the constitutively expressed sidL. FC is hydroxylated to HFC by an as yet uncharacterized enzyme during conidiation. Assembly of fusarinine C (FsC) and FC is catalyzed by two different nonribosomal peptide synthetases (NRPS), sidD and sidC respectively. Subsequently, sidG catalyzes N2-acetylation of FsC for forming TAFC. Both extra- and intracellular siderophores are crucial for growth during iron limitation and virulence. This is Nonribosomal peptide synthetase sidC from Aspergillus fumigatus (strain ATCC MYA-4609 / CBS 101355 / FGSC A1100 / Af293) (Neosartorya fumigata).